A 584-amino-acid polypeptide reads, in one-letter code: Breast carcinoma-amplified sequence 1 (584 aa).

3 disordered regions span residues 1-29, 59-280, and 297-377; these read MGNQ…NASA, VATS…AAAI, and PNKA…GKLF. Polar residues-rich tracts occupy residues 59–69 and 112–128; these read VATSSPETTEI and ADSS…SNKA. 2 positions are modified to phosphoserine: Ser-124 and Ser-192. 3 stretches are compositionally biased toward basic and acidic residues: residues 186-226, 238-252, and 300-311; these read SKPK…KVDE, PAGK…KEGQ, and AETKKDPEDTGA. Ser-314 bears the Phosphoserine mark. Polar residues predominate over residues 314 to 354; that stretch reads SPTTSADLKSDKANFTSQETQGAGKNSKGCNPSGHTQSVTT. The span at 357–366 shows a compositional bias: basic and acidic residues; it reads PAKEGTKEKS. 2 positions are modified to phosphoserine: Ser-381 and Ser-399. Positions 415 to 584 are disordered; it reads TVDLNEGDAA…VSIGPVGKSK (170 aa). The span at 428–439 shows a compositional bias: basic and acidic residues; that stretch reads TEAKLKREESKP. Position 480 is a phosphothreonine (Thr-480). The segment covering 494-506 has biased composition (basic and acidic residues); it reads KGKEGSSKDKKSA. Residues 525–540 show a composition bias toward polar residues; that stretch reads CTEQATVDTNSLQNGD. Residues 541–550 are compositionally biased toward basic and acidic residues; it reads KLQKRPEKRQ. Ser-552 carries the post-translational modification Phosphoserine. The segment at 565 to 584 is interacts with DYNLL1 and DYNLL2; it reads MLDAQVQTDPVSIGPVGKSK.

As to quaternary structure, homodimer. Interacts with DYNLL1 and DYNLL2. Highly expressed in the brain and, more specifically, in oligodendrocytes (at protein level). Expressed in the prostate, and at lower levels in testis, intestine and colon. Overexpressed in most breast cancer cell lines and down-regulated in some colorectal tumors.

Its subcellular location is the cytoplasm. Required for myelination. In Homo sapiens (Human), this protein is Breast carcinoma-amplified sequence 1 (BCAS1).